A 432-amino-acid chain; its full sequence is MQVSVETTQGLGRRVTITIAADSIETAVKSELVNVAKKVRIDGFRKGKVPMNIVAQRYGASVRQDVLGDLMSRNFIDAIIKEKINPAGAPTYVPGEYKLGEDFTYSVEFEVYPEVELQGLEAIEVEKPIVEVTDADVDGMLDTLRKQQATWKEKDGAVEAEDRVTIDFTGSVDGEEFEGGKASDFVLAMGQGRMIPGFEDGIKGHKAGEEFTIDVTFPEEYHAENLKGKAAKFAINLKKVEERELPELTAEFIKRFGVEDGSVEGLRAEVRKNMERELKSAIRNRVKSQAIEGLVKANDIDVPAALIDSEIDVLRRQAAQRFGGNEKQALELPRELFEEQAKRRVVVGLLLGEVIRTNELKADEERVKGLIEEMASAYEDPKEVIEFYSKNKELMDNMRNVALEEQAAEAVLAKAKVTEKETTFNELMNQQA.

Residues 161 to 246 (EDRVTIDFTG…LKKVEERELP (86 aa)) enclose the PPIase FKBP-type domain.

This sequence belongs to the FKBP-type PPIase family. Tig subfamily. Homodimer and monomer. In vivo most of the ribosomes are in complex with monomeric TF. Uncomplexed TF, however, is in a monomer-dimer equilibrium with approximately two thirds of TF existing in a dimeric state.

The protein resides in the cytoplasm. It catalyses the reaction [protein]-peptidylproline (omega=180) = [protein]-peptidylproline (omega=0). In terms of biological role, involved in protein export. Acts as a chaperone by maintaining the newly synthesized protein in an open conformation. Functions as a peptidyl-prolyl cis-trans isomerase. This chain is Trigger factor, found in Shigella dysenteriae serotype 1 (strain Sd197).